Reading from the N-terminus, the 463-residue chain is tRNA modification GTPase MnmE (463 aa).

Positions 29, 91, and 130 each coordinate (6S)-5-formyl-5,6,7,8-tetrahydrofolate. The 160-residue stretch at 225–384 folds into the TrmE-type G domain; the sequence is GLKVAIVGRP…LETAILEIVQ (160 aa). Position 235 (Asn-235) interacts with K(+). Residues 235–240, 254–260, and 279–282 contribute to the GTP site; these read NVGKSS, TDLPGTT, and DTAG. A Mg(2+)-binding site is contributed by Ser-239. Positions 254, 256, and 259 each coordinate K(+). Thr-260 contributes to the Mg(2+) binding site. Lys-463 serves as a coordination point for (6S)-5-formyl-5,6,7,8-tetrahydrofolate.

The protein belongs to the TRAFAC class TrmE-Era-EngA-EngB-Septin-like GTPase superfamily. TrmE GTPase family. Homodimer. Heterotetramer of two MnmE and two MnmG subunits. The cofactor is K(+).

It localises to the cytoplasm. In terms of biological role, exhibits a very high intrinsic GTPase hydrolysis rate. Involved in the addition of a carboxymethylaminomethyl (cmnm) group at the wobble position (U34) of certain tRNAs, forming tRNA-cmnm(5)s(2)U34. This Trichormus variabilis (strain ATCC 29413 / PCC 7937) (Anabaena variabilis) protein is tRNA modification GTPase MnmE.